Consider the following 54-residue polypeptide: Pars intercerebralis major peptide D1 (54 aa).

It belongs to the granulin family. In terms of processing, six disulfide bonds are present. As to expression, brain.

Its subcellular location is the secreted. This Locusta migratoria (Migratory locust) protein is Pars intercerebralis major peptide D1.